Here is a 166-residue protein sequence, read N- to C-terminus: NAD(P)H-quinone oxidoreductase subunit I, chloroplastic (166 aa).

2 consecutive 4Fe-4S ferredoxin-type domains span residues G55–K84 and L95–E124. The [4Fe-4S] cluster site is built by C64, C67, C70, C74, C104, C107, C110, and C114.

It belongs to the complex I 23 kDa subunit family. In terms of assembly, NDH is composed of at least 16 different subunits, 5 of which are encoded in the nucleus. [4Fe-4S] cluster is required as a cofactor.

It is found in the plastid. Its subcellular location is the chloroplast thylakoid membrane. It catalyses the reaction a plastoquinone + NADH + (n+1) H(+)(in) = a plastoquinol + NAD(+) + n H(+)(out). The catalysed reaction is a plastoquinone + NADPH + (n+1) H(+)(in) = a plastoquinol + NADP(+) + n H(+)(out). Its function is as follows. NDH shuttles electrons from NAD(P)H:plastoquinone, via FMN and iron-sulfur (Fe-S) centers, to quinones in the photosynthetic chain and possibly in a chloroplast respiratory chain. The immediate electron acceptor for the enzyme in this species is believed to be plastoquinone. Couples the redox reaction to proton translocation, and thus conserves the redox energy in a proton gradient. This chain is NAD(P)H-quinone oxidoreductase subunit I, chloroplastic, found in Oblivia mikanioides (Salmea mikanioides).